The chain runs to 706 residues: Protein psiG (706 aa).

Positions 1–23 are cleaved as a signal peptide; it reads MKIILTLLIILFSLNKNLNFVSS. Residues 24-644 are Extracellular-facing; it reads EVTKSRICSI…FVCKPAAIIS (621 aa). Residues Asn95, Asn107, Asn212, Asn296, Asn429, Asn521, Asn532, and Asn616 are each glycosylated (N-linked (GlcNAc...) asparagine). Positions 109–253 constitute a PA14 domain; sequence TLDKSSNIYS…SDYCGVCQGD (145 aa). The chain crosses the membrane as a helical span at residues 645-665; it reads TSVIVGVSVAAAVVAIAIVVA. Residues 666–706 lie on the Cytoplasmic side of the membrane; it reads SKKGYDAWAASNNNSLASLTSNPLYENPTGNGDNPMYQPNS. Positions 687 to 706 are disordered; that stretch reads NPLYENPTGNGDNPMYQPNS. The span at 693-706 shows a compositional bias: polar residues; sequence PTGNGDNPMYQPNS.

Belongs to the prespore-cell-inducing factor family.

The protein resides in the membrane. The polypeptide is Protein psiG (psiG-1) (Dictyostelium discoideum (Social amoeba)).